The chain runs to 328 residues: Zinc chaperone YeiR (328 aa).

Position 9-17 (9-17) interacts with GTP; it reads GFLGSGKTT. The CXCC motif signature appears at 63–66; the sequence is CMCC. Position 155 (Asp155) interacts with GTP. Residues 241–321 enclose the CobW C-terminal domain; it reads CGWIFDADTV…WNALQSALLK (81 aa).

Belongs to the SIMIBI class G3E GTPase family. ZNG1 subfamily. In terms of assembly, oligomerizes in the presence of Zn(2+).

The enzyme catalyses GTP + H2O = GDP + phosphate + H(+). With respect to regulation, GTPase activity is enhanced by Zn(2+) binding. Functionally, zinc chaperone that directly transfers zinc cofactor to target proteins, thereby activating them. Zinc is transferred from the CXCC motif in the GTPase domain to the zinc binding site in target proteins in a process requiring GTP hydrolysis. In Escherichia coli (strain K12), this protein is Zinc chaperone YeiR (yeiR).